The chain runs to 879 residues: Leucine--tRNA ligase (879 aa).

The 'HIGH' region signature appears at Pro45–His55. Residues Lys637–Ser641 carry the 'KMSKS' region motif. Lys640 lines the ATP pocket.

This sequence belongs to the class-I aminoacyl-tRNA synthetase family.

The protein resides in the cytoplasm. The catalysed reaction is tRNA(Leu) + L-leucine + ATP = L-leucyl-tRNA(Leu) + AMP + diphosphate. The chain is Leucine--tRNA ligase from Xylella fastidiosa (strain 9a5c).